The following is a 317-amino-acid chain: L-lactate dehydrogenase (317 aa).

NAD(+)-binding positions include Val-17, Asp-38, Lys-43, Tyr-69, and 83 to 84 (GA). 2 residues coordinate substrate: Gln-86 and Arg-92. NAD(+) contacts are provided by residues Ser-105, 122 to 124 (ATN), and Ser-147. Substrate is bound at residue 124 to 127 (NPVD). 152–155 (DSAR) contacts substrate. Arg-157 and His-172 together coordinate beta-D-fructose 1,6-bisphosphate. Catalysis depends on His-179, which acts as the Proton acceptor. Tyr-224 carries the phosphotyrosine modification. Thr-233 is a substrate binding site.

It belongs to the LDH/MDH superfamily. LDH family. Homotetramer.

The protein localises to the cytoplasm. The catalysed reaction is (S)-lactate + NAD(+) = pyruvate + NADH + H(+). It functions in the pathway fermentation; pyruvate fermentation to lactate; (S)-lactate from pyruvate: step 1/1. Allosterically activated by fructose 1,6-bisphosphate (FBP). Catalyzes the conversion of lactate to pyruvate. This Bacillus velezensis (strain DSM 23117 / BGSC 10A6 / LMG 26770 / FZB42) (Bacillus amyloliquefaciens subsp. plantarum) protein is L-lactate dehydrogenase.